Reading from the N-terminus, the 482-residue chain is Glycogen synthase (482 aa).

Position 15 (lysine 15) interacts with ADP-alpha-D-glucose.

This sequence belongs to the glycosyltransferase 1 family. Bacterial/plant glycogen synthase subfamily.

The enzyme catalyses [(1-&gt;4)-alpha-D-glucosyl](n) + ADP-alpha-D-glucose = [(1-&gt;4)-alpha-D-glucosyl](n+1) + ADP + H(+). It participates in glycan biosynthesis; glycogen biosynthesis. Its function is as follows. Synthesizes alpha-1,4-glucan chains using ADP-glucose. This Hydrogenobaculum sp. (strain Y04AAS1) protein is Glycogen synthase.